The chain runs to 139 residues: Large ribosomal subunit protein uL16 (139 aa).

Positions 1–11 (MLQPKRTKYRK) are enriched in basic residues. The segment at 1 to 30 (MLQPKRTKYRKPFLQSHDKRKAHKGNKVSF) is disordered.

The protein belongs to the universal ribosomal protein uL16 family. Part of the 50S ribosomal subunit.

Binds 23S rRNA and is also seen to make contacts with the A and possibly P site tRNAs. The chain is Large ribosomal subunit protein uL16 from Mycoplasmopsis synoviae (strain 53) (Mycoplasma synoviae).